The sequence spans 310 residues: Inner membrane protein YfdC (310 aa).

Positions 1–12 (MDNDKIDQHSDE) are enriched in basic and acidic residues. The segment at 1 to 27 (MDNDKIDQHSDEIEVESEEKERGKKIE) is disordered. At 1-58 (MDNDKIDQHSDEIEVESEEKERGKKIEIDEDRLPSRAMAIHEHIRQDGEKELERDAMA) the chain is on the cytoplasmic side. A helical transmembrane segment spans residues 59 to 81 (LLWSAIAAGLSMGASLLAKGIFQ). Residues 82–90 (VELEGVPGS) are Periplasmic-facing. The chain crosses the membrane as a helical span at residues 91–113 (FLLENLGYTFGFIIVIMARQQLF). Topologically, residues 114-133 (TENTVTAVLPVMQKPTMSNV) are cytoplasmic. A helical transmembrane segment spans residues 134-156 (GLLIRLWGVVLLGNILGTGIAAW). The Periplasmic portion of the chain corresponds to 157–186 (AFEYMPIFNEETRDAFVKIGMDVMKNTPSE). A helical membrane pass occupies residues 187–206 (MFANAIISGWLIATMVWMFP). Residues 207-212 (AAGAAK) lie on the Cytoplasmic side of the membrane. Residues 213–232 (IVVIILMTWLIALGDTTHIV) traverse the membrane as a helical segment. Residues 233–251 (VGSVEILYLVFNGTLHWSD) are Periplasmic-facing. A helical transmembrane segment spans residues 252–274 (FIWPFALPTLAGNICGGTFIFAL). The Cytoplasmic portion of the chain corresponds to 275 to 310 (MSHAQIRNDMSNKRKAEARQKAERAENIKKNYKNPA). Basic and acidic residues predominate over residues 291–303 (EARQKAERAENIK). The disordered stretch occupies residues 291–310 (EARQKAERAENIKKNYKNPA).

It localises to the cell inner membrane. In Escherichia coli (strain K12), this protein is Inner membrane protein YfdC (yfdC).